The sequence spans 153 residues: Aspartate carbamoyltransferase regulatory chain (153 aa).

Cys-109, Cys-114, Cys-138, and Cys-141 together coordinate Zn(2+).

The protein belongs to the PyrI family. As to quaternary structure, contains catalytic and regulatory chains. Zn(2+) is required as a cofactor.

Involved in allosteric regulation of aspartate carbamoyltransferase. This Cenarchaeum symbiosum (strain A) protein is Aspartate carbamoyltransferase regulatory chain.